Consider the following 173-residue polypeptide: Crossover junction endodeoxyribonuclease RuvC (173 aa).

Active-site residues include aspartate 10, glutamate 71, and aspartate 143. The Mg(2+) site is built by aspartate 10, glutamate 71, and aspartate 143.

This sequence belongs to the RuvC family. Homodimer which binds Holliday junction (HJ) DNA. The HJ becomes 2-fold symmetrical on binding to RuvC with unstacked arms; it has a different conformation from HJ DNA in complex with RuvA. In the full resolvosome a probable DNA-RuvA(4)-RuvB(12)-RuvC(2) complex forms which resolves the HJ. Mg(2+) is required as a cofactor.

It is found in the cytoplasm. It carries out the reaction Endonucleolytic cleavage at a junction such as a reciprocal single-stranded crossover between two homologous DNA duplexes (Holliday junction).. Its function is as follows. The RuvA-RuvB-RuvC complex processes Holliday junction (HJ) DNA during genetic recombination and DNA repair. Endonuclease that resolves HJ intermediates. Cleaves cruciform DNA by making single-stranded nicks across the HJ at symmetrical positions within the homologous arms, yielding a 5'-phosphate and a 3'-hydroxyl group; requires a central core of homology in the junction. The consensus cleavage sequence is 5'-(A/T)TT(C/G)-3'. Cleavage occurs on the 3'-side of the TT dinucleotide at the point of strand exchange. HJ branch migration catalyzed by RuvA-RuvB allows RuvC to scan DNA until it finds its consensus sequence, where it cleaves and resolves the cruciform DNA. This Gloeobacter violaceus (strain ATCC 29082 / PCC 7421) protein is Crossover junction endodeoxyribonuclease RuvC.